A 419-amino-acid polypeptide reads, in one-letter code: UDP-N-acetylglucosamine 1-carboxyvinyltransferase (419 aa).

22–23 (KN) is a phosphoenolpyruvate binding site. Residue Arg91 participates in UDP-N-acetyl-alpha-D-glucosamine binding. The active-site Proton donor is the Cys115. The residue at position 115 (Cys115) is a 2-(S-cysteinyl)pyruvic acid O-phosphothioketal. Residues 120-124 (RPVDL), 160-163 (KVSV), Asp305, and Val327 each bind UDP-N-acetyl-alpha-D-glucosamine.

It belongs to the EPSP synthase family. MurA subfamily.

It is found in the cytoplasm. The catalysed reaction is phosphoenolpyruvate + UDP-N-acetyl-alpha-D-glucosamine = UDP-N-acetyl-3-O-(1-carboxyvinyl)-alpha-D-glucosamine + phosphate. Its pathway is cell wall biogenesis; peptidoglycan biosynthesis. Its function is as follows. Cell wall formation. Adds enolpyruvyl to UDP-N-acetylglucosamine. This is UDP-N-acetylglucosamine 1-carboxyvinyltransferase from Escherichia coli (strain K12 / MC4100 / BW2952).